Here is a 115-residue protein sequence, read N- to C-terminus: MWLLRPAGSNFIVALIVLACAGPLTCSAQLDAGILNPWGSAGHNDAVMPGMFANSESDERFYSPHCSSRGLPLVNESMASVIFFLSLAMVCVAIVAILYNCCFNSFKNSVINSRW.

Positions 1–27 are cleaved as a signal peptide; that stretch reads MWLLRPAGSNFIVALIVLACAGPLTCS. Residues 28–77 lie on the Virion surface side of the membrane; it reads AQLDAGILNPWGSAGHNDAVMPGMFANSESDERFYSPHCSSRGLPLVNES. The chain crosses the membrane as a helical span at residues 78–98; that stretch reads MASVIFFLSLAMVCVAIVAIL. Residues 99–115 lie on the Intravirion side of the membrane; it reads YNCCFNSFKNSVINSRW.

The protein belongs to the herpesviridae glycoprotein N family. Interacts (via N-terminus) with gM (via N-terminus). The gM-gN heterodimer forms the gCII complex.

It is found in the virion membrane. Its subcellular location is the host membrane. It localises to the host Golgi apparatus. The protein resides in the host trans-Golgi network. Functionally, envelope glycoprotein necessary for proper maturation of gM and modulation of its membrane fusion activity. Also plays a critical role in virion morphogenesis. The sequence is that of Envelope glycoprotein N from Psittacid herpesvirus 1 (isolate Amazon parrot/-/97-0001/1997) (PsHV-1).